Consider the following 302-residue polypeptide: DNA-directed RNA polymerase II subunit rpb3 (302 aa).

Belongs to the archaeal Rpo3/eukaryotic RPB3 RNA polymerase subunit family. Component of the RNA polymerase II (Pol II) complex consisting of 12 subunits.

The protein localises to the nucleus. Functionally, DNA-dependent RNA polymerase catalyzes the transcription of DNA into RNA using the four ribonucleoside triphosphates as substrates. Component of RNA polymerase II which synthesizes mRNA precursors and many functional non-coding RNAs. Pol II is the central component of the basal RNA polymerase II transcription machinery. It is composed of mobile elements that move relative to each other. Rpb3 is part of the core element with the central large cleft and the clamp element that moves to open and close the cleft. The sequence is that of DNA-directed RNA polymerase II subunit rpb3 (polr2c) from Dictyostelium discoideum (Social amoeba).